Here is a 330-residue protein sequence, read N- to C-terminus: Ferredoxin--NADP reductase (330 aa).

Residues E35, Q43, Y48, V90, F123, D285, and T326 each coordinate FAD.

It belongs to the ferredoxin--NADP reductase type 2 family. In terms of assembly, homodimer. FAD is required as a cofactor.

The catalysed reaction is 2 reduced [2Fe-2S]-[ferredoxin] + NADP(+) + H(+) = 2 oxidized [2Fe-2S]-[ferredoxin] + NADPH. The protein is Ferredoxin--NADP reductase of Streptococcus pyogenes serotype M2 (strain MGAS10270).